Consider the following 416-residue polypeptide: Peptide chain release factor subunit 1 (416 aa).

The protein belongs to the eukaryotic release factor 1 family. Heterodimer of two subunits, one of which binds GTP.

The protein resides in the cytoplasm. In terms of biological role, directs the termination of nascent peptide synthesis (translation) in response to the termination codons UAA, UAG and UGA. This is Peptide chain release factor subunit 1 from Halorubrum lacusprofundi (strain ATCC 49239 / DSM 5036 / JCM 8891 / ACAM 34).